Here is a 346-residue protein sequence, read N- to C-terminus: Ribonucleoside-diphosphate reductase subunit beta (346 aa).

Positions 89, 120, and 123 each coordinate Fe cation. The active site involves tyrosine 129. Fe cation contacts are provided by glutamate 193, glutamate 227, and histidine 230.

It belongs to the ribonucleoside diphosphate reductase small chain family. As to quaternary structure, tetramer of two alpha and two beta subunits. Fe cation is required as a cofactor.

The catalysed reaction is a 2'-deoxyribonucleoside 5'-diphosphate + [thioredoxin]-disulfide + H2O = a ribonucleoside 5'-diphosphate + [thioredoxin]-dithiol. Provides the precursors necessary for DNA synthesis. Catalyzes the biosynthesis of deoxyribonucleotides from the corresponding ribonucleotides. The sequence is that of Ribonucleoside-diphosphate reductase subunit beta (nrdB) from Chlamydia muridarum (strain MoPn / Nigg).